A 27-amino-acid chain; its full sequence is Larval-specific very high density lipoprotein (27 aa).

Homodimer. Hemolymph.

It localises to the secreted. The protein localises to the extracellular space. Functionally, unknown (it might play a role in lipid transport and/or storage protein metabolism during metamorphosis). The protein is Larval-specific very high density lipoprotein of Apis mellifera (Honeybee).